A 75-amino-acid chain; its full sequence is M-myrmeciitoxin-Mp2a (75 aa).

An N-terminal signal peptide occupies residues 1-26; that stretch reads MKLSCLLLTLAIIFVLTIVHAPNVEA. The propeptide occupies 27–48; the sequence is KALADPESDAVGFADAVGEADP. Leu-74 is subject to Leucine amide.

Belongs to the formicidae venom precursor-01 superfamily. Ant pilosulin family. Heterodimer with M-MIITX-Mp2b (pilosin-3b) (AC P0C023); disulfide-linked. Only heterodimers (and not monomers) have been identified in the venom. Expressed by the venom gland.

It localises to the secreted. Its function is as follows. Heterodimer protein that may serve both defensive (pain-inducing) and predatory (insecticidal) roles. Has membrane-disrupting activity and shows induction of non-specific calcium influx into cells,. Shows broad-spectrum activity against a diverse range of bacteria, and cell lines, as well as hemolytic activity (EC(50)=2.18 uM). In vivo, shows moderate insecticidal activity against D.melanogaster and potent anthelmintic activity against the veterinary nematode H.contortus. In addition, intraplantar injection into mice induces nocifensive behavior and mechanical allodynia. The chain is M-myrmeciitoxin-Mp2a from Myrmecia pilosula (Jack jumper ant).